The following is a 400-amino-acid chain: Phosphoglycerate kinase (400 aa).

Residues 22 to 24, Arg-38, 61 to 64, Arg-120, and Arg-153 contribute to the substrate site; these read DFN and HLGR. ATP is bound by residues Lys-206, Gly-297, Glu-328, and 354-357; that span reads GGDT.

It belongs to the phosphoglycerate kinase family. In terms of assembly, monomer.

Its subcellular location is the cytoplasm. It catalyses the reaction (2R)-3-phosphoglycerate + ATP = (2R)-3-phospho-glyceroyl phosphate + ADP. It functions in the pathway carbohydrate degradation; glycolysis; pyruvate from D-glyceraldehyde 3-phosphate: step 2/5. The sequence is that of Phosphoglycerate kinase from Campylobacter curvus (strain 525.92).